A 77-amino-acid chain; its full sequence is MVKLRLKRCGRKQPVYRIVAIDVRSRREGRDLRKVGFYDPINNQTYLNIPAILFFLEKGAQPTGTVYDILKKAGVSF.

This sequence belongs to the bacterial ribosomal protein bS16 family.

The protein resides in the plastid. Its subcellular location is the chloroplast. The polypeptide is Small ribosomal subunit protein bS16c (Eucalyptus globulus subsp. globulus (Tasmanian blue gum)).